Consider the following 597-residue polypeptide: ATP-dependent lipid A-core flippase (597 aa).

6 helical membrane passes run 26–46, 76–96, 138–158, 164–184, 263–283, and 292–312; these read LWPY…AMAV, WFVP…QYAS, AIVF…VTLV, VVFL…IVAV, QPLT…IAVV, and VGGF…LKHL. Residues 38-321 enclose the ABC transmembrane type-1 domain; the sequence is IGAIVAMAVS…LMDVNQPLQR (284 aa). The ABC transporter domain occupies 353–590; the sequence is VEFRDVSFVY…DGLYAHLHRI (238 aa). 390–397 is an ATP binding site; the sequence is GPSGSGKT.

Belongs to the ABC transporter superfamily. Lipid exporter (TC 3.A.1.106) family. In terms of assembly, homodimer.

The protein resides in the cell inner membrane. The catalysed reaction is ATP + H2O + lipid A-core oligosaccharideSide 1 = ADP + phosphate + lipid A-core oligosaccharideSide 2.. Functionally, involved in lipopolysaccharide (LPS) biosynthesis. Translocates lipid A-core from the inner to the outer leaflet of the inner membrane. Transmembrane domains (TMD) form a pore in the inner membrane and the ATP-binding domain (NBD) is responsible for energy generation. The chain is ATP-dependent lipid A-core flippase from Paraburkholderia xenovorans (strain LB400).